We begin with the raw amino-acid sequence, 101 residues long: Small ribosomal subunit protein uS14 (101 aa).

The interval 51–70 (LPRDSSPSRQRNRCRQTGRP) is disordered.

It belongs to the universal ribosomal protein uS14 family. As to quaternary structure, part of the 30S ribosomal subunit. Contacts proteins S3 and S10.

In terms of biological role, binds 16S rRNA, required for the assembly of 30S particles and may also be responsible for determining the conformation of the 16S rRNA at the A site. The chain is Small ribosomal subunit protein uS14 from Salmonella arizonae (strain ATCC BAA-731 / CDC346-86 / RSK2980).